Here is a 615-residue protein sequence, read N- to C-terminus: uncharacterized protein (615 aa).

Asp403 acts as the Proton acceptor in catalysis. The active-site Proton donor is the Glu406.

The protein belongs to the glycosyl hydrolase 15 family.

This is an uncharacterized protein from Methanocaldococcus jannaschii (strain ATCC 43067 / DSM 2661 / JAL-1 / JCM 10045 / NBRC 100440) (Methanococcus jannaschii).